Reading from the N-terminus, the 113-residue chain is Hydrogenase maturation factor HypA (113 aa).

His2 provides a ligand contact to Ni(2+). Zn(2+) contacts are provided by Cys73, Cys76, Cys89, and Cys92.

The protein belongs to the HypA/HybF family.

Its function is as follows. Involved in the maturation of [NiFe] hydrogenases. Required for nickel insertion into the metal center of the hydrogenase. The polypeptide is Hydrogenase maturation factor HypA (Rhodopseudomonas palustris (strain BisA53)).